The sequence spans 30 residues: Circulin A (30 aa).

Positions Gly-1 to Asn-30 form a cross-link, cyclopeptide (Gly-Asn). Cystine bridges form between Cys-4–Cys-20, Cys-8–Cys-22, and Cys-13–Cys-27.

This is a cyclic peptide. In terms of tissue distribution, expressed in fruit, pedicel, root and stem but not in leaf (at protein level).

Its function is as follows. Probably participates in a plant defense mechanism. This Chassalia chartacea (Chassalia curviflora) protein is Circulin A.